The sequence spans 167 residues: Small ribosomal subunit protein uS5 (167 aa).

The S5 DRBM domain occupies 12–75; sequence LQEKLVQVNR…EAARRNMIQV (64 aa).

It belongs to the universal ribosomal protein uS5 family. In terms of assembly, part of the 30S ribosomal subunit. Contacts proteins S4 and S8.

With S4 and S12 plays an important role in translational accuracy. Its function is as follows. Located at the back of the 30S subunit body where it stabilizes the conformation of the head with respect to the body. The protein is Small ribosomal subunit protein uS5 of Alcanivorax borkumensis (strain ATCC 700651 / DSM 11573 / NCIMB 13689 / SK2).